Consider the following 219-residue polypeptide: Large ribosomal subunit protein uL3 (219 aa).

It belongs to the universal ribosomal protein uL3 family. Part of the 50S ribosomal subunit. Forms a cluster with proteins L14 and L19.

One of the primary rRNA binding proteins, it binds directly near the 3'-end of the 23S rRNA, where it nucleates assembly of the 50S subunit. This Corynebacterium kroppenstedtii (strain DSM 44385 / JCM 11950 / CIP 105744 / CCUG 35717) protein is Large ribosomal subunit protein uL3.